The chain runs to 480 residues: Type II methyltransferase M.NspV (480 aa).

Belongs to the methyltransferase superfamily.

Functionally, a gamma subtype methylase that recognizes the double-stranded sequence 5'-TTCGAA-3', and methylates it on an unknown base to protect it against the NspV endonuclease. In Nostoc sp. (strain ATCC 29411 / PCC 7524), this protein is Type II methyltransferase M.NspV.